A 553-amino-acid polypeptide reads, in one-letter code: Salicylyl-CoA synthase / salicylate adenylyltransferase (553 aa).

G203 serves as a coordination point for ATP. Substrate is bound at residue 246–247 (HN). Residues G320, V342, D426, R441, and K533 each contribute to the ATP site. K533 contacts substrate.

The protein belongs to the ATP-dependent AMP-binding enzyme family.

It carries out the reaction salicylate + ATP + CoA = 2-hydroxybenzoyl-CoA + AMP + diphosphate. Involved in the degradation of salicylate via a pathway involving coenzyme A derivative. Catalyzes the conversion of salicylate to salicyloyl-CoA via the formation of a salicylate-adenylate intermediate. The substrate specificity is strong, since benzoate, 3-hydroxybenzoate, 4-hydroxybenzoate, gentisate, 2-aminobenzoate, aminobenzoate, salicylamide, salicylaldoxime and 2-hydroxyphenyl acetate cannot substitute for salicylate. In Streptomyces sp, this protein is Salicylyl-CoA synthase / salicylate adenylyltransferase.